We begin with the raw amino-acid sequence, 145 residues long: Synaptojanin-2-binding protein (145 aa).

Residues 1-117 lie on the Cytoplasmic side of the membrane; sequence MNGRVDYLVT…VHRGEGEPSG (117 aa). One can recognise a PDZ domain in the interval 13–100; sequence EINLTRGPSG…AVSLRVQHRL (88 aa). A helical; Anchor for type IV membrane protein membrane pass occupies residues 118 to 138; that stretch reads VPVAMVLLPVFALTMVAVWAF. Residues 139–145 lie on the Mitochondrial intermembrane side of the membrane; sequence VRYRKQL.

As to quaternary structure, binds (via the PDZ domain) to isoform 2A of SYNJ2 (via the unique motif in the C-terminus). Interacts (via C-terminus) with RALBP1. Interacts (via PDZ domain) with ACVR2A (via C-terminus) and ACVR2B (via C-terminus). Forms a ternary complex with ACVR2A and RALBP1. Interacts with MAPK12. Interacts with DLL1; enhances DLL1 protein stability, and promotes notch signaling in endothelial cells. In terms of tissue distribution, isoform 1 and isoform 2 are widely expressed, notably in brain, heart, lung, liver, kidney, skeletal muscle, ovary and testis. Isoform 3 is detected only in heart, spleen and testis.

It is found in the mitochondrion outer membrane. It localises to the cytoplasm. The protein localises to the perinuclear region. Its function is as follows. Isoform 1 regulates endocytosis of activin type 2 receptor kinases through the Ral/RALBP1-dependent pathway and may be involved in suppression of activin-induced signal transduction. Isoform 2 and isoform 3 show a stimulatory affect on activin-induced signal transduction and enhance activin type 2 expression at the cell surface. This chain is Synaptojanin-2-binding protein, found in Mus musculus (Mouse).